Here is a 349-residue protein sequence, read N- to C-terminus: Putative methylesterase 12, chloroplastic (349 aa).

The transit peptide at 1–77 (MGNRVICMKK…GSTSSRRGTL (77 aa)) directs the protein to the chloroplast. Residues 61 to 80 (GSMSRRIGSTSSRRGTLSDS) form a disordered region. Ser-173 acts as the Acyl-ester intermediate in catalysis. Residues Asp-300 and His-328 each act as charge relay system in the active site.

Belongs to the AB hydrolase superfamily. Methylesterase family.

Its subcellular location is the plastid. The protein localises to the chloroplast. Putative methylesterase. The polypeptide is Putative methylesterase 12, chloroplastic (Arabidopsis thaliana (Mouse-ear cress)).